A 325-amino-acid polypeptide reads, in one-letter code: Flotillin-like protein FloA (325 aa).

2 helical membrane-spanning segments follow: residues 4 to 24 (LGIVFLAAVVLLFVFLFFSFI) and 26 to 46 (VGLWISAWAAGVRVPLLTLVA).

This sequence belongs to the flotillin-like FloA family. Homooligomerizes.

The protein localises to the cell membrane. It is found in the membrane raft. Functionally, found in functional membrane microdomains (FMM) that may be equivalent to eukaryotic membrane rafts. FMMs are highly dynamic and increase in number as cells age. Flotillins are thought to be important factors in membrane fluidity. This is Flotillin-like protein FloA from Thermus thermophilus (strain ATCC BAA-163 / DSM 7039 / HB27).